A 149-amino-acid polypeptide reads, in one-letter code: Large ribosomal subunit protein uL13 (149 aa).

It belongs to the universal ribosomal protein uL13 family. Part of the 50S ribosomal subunit.

Its function is as follows. This protein is one of the early assembly proteins of the 50S ribosomal subunit, although it is not seen to bind rRNA by itself. It is important during the early stages of 50S assembly. The polypeptide is Large ribosomal subunit protein uL13 (Borrelia turicatae (strain 91E135)).